We begin with the raw amino-acid sequence, 433 residues long: Adenylosuccinate synthetase (433 aa).

Residues 11-17 (GDEGKGK) and 39-41 (GHT) contribute to the GTP site. Asp-12 functions as the Proton acceptor in the catalytic mechanism. Residues Asp-12 and Gly-39 each coordinate Mg(2+). IMP contacts are provided by residues 12-15 (DEGK), 37-40 (NAGH), Thr-134, Arg-148, Asn-230, Thr-245, and Arg-309. The active-site Proton donor is the His-40. 305–311 (VTTGRKR) contributes to the substrate binding site. GTP contacts are provided by residues Arg-311, 337–339 (KLD), and 419–421 (GTG).

It belongs to the adenylosuccinate synthetase family. Homodimer. Mg(2+) serves as cofactor.

The protein localises to the cytoplasm. The catalysed reaction is IMP + L-aspartate + GTP = N(6)-(1,2-dicarboxyethyl)-AMP + GDP + phosphate + 2 H(+). The protein operates within purine metabolism; AMP biosynthesis via de novo pathway; AMP from IMP: step 1/2. Plays an important role in the de novo pathway and in the salvage pathway of purine nucleotide biosynthesis. Catalyzes the first committed step in the biosynthesis of AMP from IMP. The sequence is that of Adenylosuccinate synthetase from Eremothecium gossypii (strain ATCC 10895 / CBS 109.51 / FGSC 9923 / NRRL Y-1056) (Yeast).